A 497-amino-acid chain; its full sequence is Cytochrome P450 71A16 (497 aa).

The chain crosses the membrane as a helical span at residues Met1–Phe21. Cys439 provides a ligand contact to heme.

This sequence belongs to the cytochrome P450 family. Requires heme as cofactor.

The protein resides in the membrane. Its function is as follows. Possesses triterpene oxidizing activity. Catalyzes the C23 hydroxylation of marneral to form 23-hydroxymarneral. Catalyzes the C23 hydroxylation of marnerol to form 23-hydroxymarnerol. The protein is Cytochrome P450 71A16 (CYP71A16) of Arabidopsis thaliana (Mouse-ear cress).